Here is a 192-residue protein sequence, read N- to C-terminus: dTTP/UTP pyrophosphatase (192 aa).

The Proton acceptor role is filled by D71.

The protein belongs to the Maf family. YhdE subfamily. The cofactor is a divalent metal cation.

Its subcellular location is the cytoplasm. It carries out the reaction dTTP + H2O = dTMP + diphosphate + H(+). The catalysed reaction is UTP + H2O = UMP + diphosphate + H(+). Its function is as follows. Nucleoside triphosphate pyrophosphatase that hydrolyzes dTTP and UTP. May have a dual role in cell division arrest and in preventing the incorporation of modified nucleotides into cellular nucleic acids. The sequence is that of dTTP/UTP pyrophosphatase from Pseudoalteromonas atlantica (strain T6c / ATCC BAA-1087).